The sequence spans 589 residues: Protein MICRORCHIDIA 3 (589 aa).

The disordered stretch occupies residues 1–33 (MAPESKNAGVSVVVNLDSDSDSDNDDGVGGRGA). Positions 542-589 (MRCEEYVKKETELEQTVSNLAKELEETKSKCARLALLVDAKRREMQQV) form a coiled coil.

The protein belongs to the MORC ATPase protein family. Homodimer and heterodimer. Component of an RNA-directed DNA methylation (RdDM) complex. It depends on Mg(2+) as a cofactor. The cofactor is Mn(2+).

It localises to the nucleus. In terms of biological role, exhibits ATPase activity. Binds DNA/RNA in a non-specific manner and exhibits endonuclease activity. Probably involved in DNA repair. Involved in RNA-directed DNA methylation (RdDM) as a component of the RdDM machinery and required for gene silencing. May also be involved in the regulation of chromatin architecture to maintain gene silencing. The protein is Protein MICRORCHIDIA 3 of Arabidopsis thaliana (Mouse-ear cress).